Here is a 290-residue protein sequence, read N- to C-terminus: ATP synthase gamma chain (290 aa).

Belongs to the ATPase gamma chain family. In terms of assembly, F-type ATPases have 2 components, CF(1) - the catalytic core - and CF(0) - the membrane proton channel. CF(1) has five subunits: alpha(3), beta(3), gamma(1), delta(1), epsilon(1). CF(0) has three main subunits: a, b and c.

Its subcellular location is the cell membrane. Functionally, produces ATP from ADP in the presence of a proton gradient across the membrane. The gamma chain is believed to be important in regulating ATPase activity and the flow of protons through the CF(0) complex. The sequence is that of ATP synthase gamma chain from Buchnera aphidicola subsp. Acyrthosiphon pisum (strain 5A).